A 270-amino-acid polypeptide reads, in one-letter code: Bis(5'-nucleosyl)-tetraphosphatase, symmetrical (270 aa).

Belongs to the Ap4A hydrolase family.

It catalyses the reaction P(1),P(4)-bis(5'-adenosyl) tetraphosphate + H2O = 2 ADP + 2 H(+). Hydrolyzes diadenosine 5',5'''-P1,P4-tetraphosphate to yield ADP. This is Bis(5'-nucleosyl)-tetraphosphatase, symmetrical from Actinobacillus pleuropneumoniae serotype 5b (strain L20).